Reading from the N-terminus, the 215-residue chain is Phosphatidylserine decarboxylase proenzyme (215 aa).

Residue serine 186 is the Schiff-base intermediate with substrate; via pyruvic acid of the active site. At serine 186 the chain carries Pyruvic acid (Ser); by autocatalysis.

It belongs to the phosphatidylserine decarboxylase family. PSD-A subfamily. In terms of assembly, heterodimer of a large membrane-associated beta subunit and a small pyruvoyl-containing alpha subunit. Pyruvate serves as cofactor. Post-translationally, is synthesized initially as an inactive proenzyme. Formation of the active enzyme involves a self-maturation process in which the active site pyruvoyl group is generated from an internal serine residue via an autocatalytic post-translational modification. Two non-identical subunits are generated from the proenzyme in this reaction, and the pyruvate is formed at the N-terminus of the alpha chain, which is derived from the carboxyl end of the proenzyme. The post-translation cleavage follows an unusual pathway, termed non-hydrolytic serinolysis, in which the side chain hydroxyl group of the serine supplies its oxygen atom to form the C-terminus of the beta chain, while the remainder of the serine residue undergoes an oxidative deamination to produce ammonia and the pyruvoyl prosthetic group on the alpha chain.

Its subcellular location is the cell membrane. It catalyses the reaction a 1,2-diacyl-sn-glycero-3-phospho-L-serine + H(+) = a 1,2-diacyl-sn-glycero-3-phosphoethanolamine + CO2. Its pathway is phospholipid metabolism; phosphatidylethanolamine biosynthesis; phosphatidylethanolamine from CDP-diacylglycerol: step 2/2. Catalyzes the formation of phosphatidylethanolamine (PtdEtn) from phosphatidylserine (PtdSer). In Pelagibacter ubique (strain HTCC1062), this protein is Phosphatidylserine decarboxylase proenzyme.